The following is a 749-amino-acid chain: 5-methyltetrahydropteroyltriglutamate--homocysteine methyltransferase (749 aa).

Residues 15–18 (RELK) and Lys114 contribute to the 5-methyltetrahydropteroyltri-L-glutamate site. L-homocysteine is bound by residues 425–427 (IGS) and Glu478. L-methionine contacts are provided by residues 425–427 (IGS) and Glu478. Trp555 is a 5-methyltetrahydropteroyltri-L-glutamate binding site. Asp593 lines the L-homocysteine pocket. An L-methionine-binding site is contributed by Asp593. 5-methyltetrahydropteroyltri-L-glutamate is bound at residue Glu599. Zn(2+) is bound by residues His636, Cys638, and Glu660. His689 functions as the Proton donor in the catalytic mechanism. Residue Cys721 participates in Zn(2+) binding.

Belongs to the vitamin-B12 independent methionine synthase family. Zn(2+) serves as cofactor.

The enzyme catalyses 5-methyltetrahydropteroyltri-L-glutamate + L-homocysteine = tetrahydropteroyltri-L-glutamate + L-methionine. The protein operates within amino-acid biosynthesis; L-methionine biosynthesis via de novo pathway; L-methionine from L-homocysteine (MetE route): step 1/1. In terms of biological role, catalyzes the transfer of a methyl group from 5-methyltetrahydrofolate to homocysteine resulting in methionine formation. The sequence is that of 5-methyltetrahydropteroyltriglutamate--homocysteine methyltransferase from Streptococcus thermophilus (strain ATCC BAA-491 / LMD-9).